The chain runs to 613 residues: DNA mismatch repair protein MutL (613 aa).

This sequence belongs to the DNA mismatch repair MutL/HexB family.

Its function is as follows. This protein is involved in the repair of mismatches in DNA. It is required for dam-dependent methyl-directed DNA mismatch repair. May act as a 'molecular matchmaker', a protein that promotes the formation of a stable complex between two or more DNA-binding proteins in an ATP-dependent manner without itself being part of a final effector complex. This Flavobacterium psychrophilum (strain ATCC 49511 / DSM 21280 / CIP 103535 / JIP02/86) protein is DNA mismatch repair protein MutL.